The following is a 107-amino-acid chain: ATP-dependent Clp protease adapter protein ClpS (107 aa).

Belongs to the ClpS family. Binds to the N-terminal domain of the chaperone ClpA.

Its function is as follows. Involved in the modulation of the specificity of the ClpAP-mediated ATP-dependent protein degradation. In Acinetobacter baylyi (strain ATCC 33305 / BD413 / ADP1), this protein is ATP-dependent Clp protease adapter protein ClpS.